Here is a 421-residue protein sequence, read N- to C-terminus: MTESVLDYMTRLGRAAREASRVIGRASTAQKNRALQATAAALDEARDELSAANALDLAYGQANGLEPAMLERLALTPARIDSMIVGLRQVASLADPVGAIRDMSYRPSGIQVGKMRVPLGVVGIIYESRPNVTIDAASLCLKSGNATILRGGSEAIHSNRAIAACIARGLAEAGLPAAVVQVVETTDRAAVGALITMPEYVDVIVPRGGKGLIERVSRDARVPVIKHLDGICHVYVSAHADLPKAQKIAFNAKTYRYGICGAMETLLVDQTIAADFLPAMAAQFREKGVELRGCERTRELIDVMPATEDDWHTEYLAAILSIRVVSGLDEAIEHINHYGSHHSDAIVSDHQSQIRRFMAEVDSSSVMVNAPTSFADGFEYGLGAEIGISTDKLHARGPVGLEGLTCEKYIVIGDGQLRGHA.

This sequence belongs to the gamma-glutamyl phosphate reductase family.

Its subcellular location is the cytoplasm. The catalysed reaction is L-glutamate 5-semialdehyde + phosphate + NADP(+) = L-glutamyl 5-phosphate + NADPH + H(+). Its pathway is amino-acid biosynthesis; L-proline biosynthesis; L-glutamate 5-semialdehyde from L-glutamate: step 2/2. Its function is as follows. Catalyzes the NADPH-dependent reduction of L-glutamate 5-phosphate into L-glutamate 5-semialdehyde and phosphate. The product spontaneously undergoes cyclization to form 1-pyrroline-5-carboxylate. The sequence is that of Gamma-glutamyl phosphate reductase from Pseudomonas syringae pv. tomato (strain ATCC BAA-871 / DC3000).